A 285-amino-acid polypeptide reads, in one-letter code: Pantothenate synthetase (285 aa).

Residue methionine 30–histidine 37 participates in ATP binding. Histidine 37 functions as the Proton donor in the catalytic mechanism. Glutamine 61 provides a ligand contact to (R)-pantoate. A beta-alanine-binding site is contributed by glutamine 61. An ATP-binding site is contributed by glycine 147–aspartate 150. Glutamine 153 is a binding site for (R)-pantoate. Residues valine 176 and lysine 184–arginine 187 contribute to the ATP site.

Belongs to the pantothenate synthetase family. Homodimer.

It is found in the cytoplasm. The enzyme catalyses (R)-pantoate + beta-alanine + ATP = (R)-pantothenate + AMP + diphosphate + H(+). It functions in the pathway cofactor biosynthesis; (R)-pantothenate biosynthesis; (R)-pantothenate from (R)-pantoate and beta-alanine: step 1/1. In terms of biological role, catalyzes the condensation of pantoate with beta-alanine in an ATP-dependent reaction via a pantoyl-adenylate intermediate. The polypeptide is Pantothenate synthetase (Listeria monocytogenes serovar 1/2a (strain ATCC BAA-679 / EGD-e)).